The chain runs to 457 residues: Aromatic amino acid transport protein AroP (457 aa).

The Cytoplasmic portion of the chain corresponds to 1–19 (MMEGQQHGEQLKRGLKNRH). Residues 20-40 (IQLIALGGAIGTGLFLGSASV) form a helical membrane-spanning segment. The Periplasmic segment spans residues 41 to 42 (IQ). The chain crosses the membrane as a helical span at residues 43–63 (SAGPGIILGYAIAGFIAFLIM). At 64-86 (RQLGEMVVEEPVAGSFSHFAYKY) the chain is on the cytoplasmic side. Residues 87–107 (WGSFAGFASGWNYWVLYVLVA) traverse the membrane as a helical segment. Residues 108 to 117 (MAELTAVGKY) lie on the Periplasmic side of the membrane. A helical membrane pass occupies residues 118–138 (IQFWYPEIPTWVSAAVFFVVI). Topologically, residues 139–155 (NAINLTNVKVFGEMEFW) are cytoplasmic. Residues 156–176 (FAIIKVIAVVAMIIFGGWLLF) traverse the membrane as a helical segment. The Periplasmic segment spans residues 177–201 (SGNGGPQASVSNLWDQGGFLPHGFT). Residues 202 to 222 (GLVMMMAIIMFSFGGLELVGI) form a helical membrane-spanning segment. The Cytoplasmic segment spans residues 223-240 (TAAEADNPEQSIPKATNQ). A helical membrane pass occupies residues 241–261 (VIYRILIFYIGSLAVLLSLMP). The Periplasmic portion of the chain corresponds to 262-271 (WTRVTADTSP). The helical transmembrane segment at 272 to 292 (FVLIFHELGDTFVANALNIVV) threads the bilayer. Over 293-333 (LTAALSVYNSCVYCNSRMLFGLAQQGNAPKALASVDKRGVP) the chain is Cytoplasmic. The helical transmembrane segment at 334 to 354 (VNTILVSALVTALCVLINYLA) threads the bilayer. Topologically, residues 355-358 (PESA) are periplasmic. The chain crosses the membrane as a helical span at residues 359-379 (FGLLMALVVSALVINWAMISL). Residues 380 to 399 (AHMKFRRAKQEQGVVTRFPA) lie on the Cytoplasmic side of the membrane. The chain crosses the membrane as a helical span at residues 400–420 (LLYPLGNWICLLFMAAVLVIM). The Periplasmic portion of the chain corresponds to 421-425 (LMTPG). The chain crosses the membrane as a helical span at residues 426–446 (MAISVYLIPVWLIVLGIGYLF). Over 447–457 (KEKTAKAVKAH) the chain is Cytoplasmic.

This sequence belongs to the amino acid-polyamine-organocation (APC) superfamily. Amino acid transporter (AAT) (TC 2.A.3.1) family.

It is found in the cell inner membrane. The enzyme catalyses L-phenylalanine(in) + H(+)(in) = L-phenylalanine(out) + H(+)(out). It catalyses the reaction L-tryptophan(in) + H(+)(in) = L-tryptophan(out) + H(+)(out). The catalysed reaction is L-tyrosine(in) + H(+)(in) = L-tyrosine(out) + H(+)(out). Functionally, permease that is involved in the active transport across the cytoplasmic membrane of all three aromatic amino acids, phenylalanine, tyrosine and tryptophan. The chain is Aromatic amino acid transport protein AroP (aroP) from Shigella flexneri.